The primary structure comprises 330 residues: Ketol-acid reductoisomerase (NADP(+)) (330 aa).

Positions 1–181 constitute a KARI N-terminal Rossmann domain; it reads MNAYYEQDAD…GGTKAGVIET (181 aa). NADP(+) contacts are provided by residues 24-27, arginine 47, serine 50, serine 52, and 82-85; these read YGSQ and DQYQ. The active site involves histidine 107. Glycine 133 contributes to the NADP(+) binding site. Residues 182–327 enclose the KARI C-terminal knotted domain; that stretch reads TFKNETETDL…SKLRDMMSWL (146 aa). Mg(2+)-binding residues include aspartate 190, glutamate 194, glutamate 226, and glutamate 230. A substrate-binding site is contributed by serine 251.

Belongs to the ketol-acid reductoisomerase family. Requires Mg(2+) as cofactor.

The enzyme catalyses (2R)-2,3-dihydroxy-3-methylbutanoate + NADP(+) = (2S)-2-acetolactate + NADPH + H(+). The catalysed reaction is (2R,3R)-2,3-dihydroxy-3-methylpentanoate + NADP(+) = (S)-2-ethyl-2-hydroxy-3-oxobutanoate + NADPH + H(+). Its pathway is amino-acid biosynthesis; L-isoleucine biosynthesis; L-isoleucine from 2-oxobutanoate: step 2/4. It participates in amino-acid biosynthesis; L-valine biosynthesis; L-valine from pyruvate: step 2/4. Its function is as follows. Involved in the biosynthesis of branched-chain amino acids (BCAA). Catalyzes an alkyl-migration followed by a ketol-acid reduction of (S)-2-acetolactate (S2AL) to yield (R)-2,3-dihydroxy-isovalerate. In the isomerase reaction, S2AL is rearranged via a Mg-dependent methyl migration to produce 3-hydroxy-3-methyl-2-ketobutyrate (HMKB). In the reductase reaction, this 2-ketoacid undergoes a metal-dependent reduction by NADPH to yield (R)-2,3-dihydroxy-isovalerate. The protein is Ketol-acid reductoisomerase (NADP(+)) of Chlorobium limicola (strain DSM 245 / NBRC 103803 / 6330).